Reading from the N-terminus, the 120-residue chain is NAD(P)H-quinone oxidoreductase subunit 3, chloroplastic (120 aa).

3 helical membrane-spanning segments follow: residues 14–34 (LIIS…LAPI), 64–84 (MFAL…PWAM), and 88–108 (ILGV…IVGL).

Belongs to the complex I subunit 3 family. NDH is composed of at least 16 different subunits, 5 of which are encoded in the nucleus.

The protein resides in the plastid. It is found in the chloroplast thylakoid membrane. The catalysed reaction is a plastoquinone + NADH + (n+1) H(+)(in) = a plastoquinol + NAD(+) + n H(+)(out). It catalyses the reaction a plastoquinone + NADPH + (n+1) H(+)(in) = a plastoquinol + NADP(+) + n H(+)(out). Its function is as follows. NDH shuttles electrons from NAD(P)H:plastoquinone, via FMN and iron-sulfur (Fe-S) centers, to quinones in the photosynthetic chain and possibly in a chloroplast respiratory chain. The immediate electron acceptor for the enzyme in this species is believed to be plastoquinone. Couples the redox reaction to proton translocation, and thus conserves the redox energy in a proton gradient. This is NAD(P)H-quinone oxidoreductase subunit 3, chloroplastic from Coffea arabica (Arabian coffee).